A 371-amino-acid chain; its full sequence is 3-dehydroquinate synthase (371 aa).

NAD(+) is bound by residues 72 to 77 (DGEEHK), 106 to 110 (GVVGD), 130 to 131 (TT), Lys143, Lys152, and 170 to 173 (TLKT). Positions 185, 248, and 265 each coordinate Zn(2+).

The protein belongs to the sugar phosphate cyclases superfamily. Dehydroquinate synthase family. Requires Co(2+) as cofactor. Zn(2+) is required as a cofactor. NAD(+) serves as cofactor.

It is found in the cytoplasm. The catalysed reaction is 7-phospho-2-dehydro-3-deoxy-D-arabino-heptonate = 3-dehydroquinate + phosphate. The protein operates within metabolic intermediate biosynthesis; chorismate biosynthesis; chorismate from D-erythrose 4-phosphate and phosphoenolpyruvate: step 2/7. Its function is as follows. Catalyzes the conversion of 3-deoxy-D-arabino-heptulosonate 7-phosphate (DAHP) to dehydroquinate (DHQ). In Pelotomaculum thermopropionicum (strain DSM 13744 / JCM 10971 / SI), this protein is 3-dehydroquinate synthase.